We begin with the raw amino-acid sequence, 146 residues long: UPF0178 protein OB0454 (146 aa).

This sequence belongs to the UPF0178 family.

The chain is UPF0178 protein OB0454 from Oceanobacillus iheyensis (strain DSM 14371 / CIP 107618 / JCM 11309 / KCTC 3954 / HTE831).